An 823-amino-acid chain; its full sequence is Bifunctional enzyme flvA (823 aa).

The pyridoxal 5'-phosphate-dependent lyase stretch occupies residues 56–535 (TAKFEMALMP…QRLYDAKFYI (480 aa)). N6-(pyridoxal phosphate)lysine is present on lysine 331. An alpha-ketoglutarate-dependent oxygenase region spans residues 573–823 (DFDALQQVSH…TLPMNVPLWL (251 aa)). Fe cation-binding residues include histidine 703 and aspartate 705.

It in the N-terminal section; belongs to the trans-sulfuration enzymes family. In the C-terminal section; belongs to the iron/ascorbate-dependent oxidoreductase family. Pyridoxal 5'-phosphate is required as a cofactor. Fe(2+) serves as cofactor.

It catalyses the reaction O-acetyl-L-homoserine + 3-methyl-2-oxobutanoate = (6S)-6-amino-3,3-dimethyl-2-oxoheptanedioate + acetate + H(+). The enzyme catalyses (6S)-3,3-dimethylpiperidine-2,6-dicarboxylate + 2-oxoglutarate + AH2 + O2 + H(+) = (2S)-5,5-dimethylpiperidine-2-carboxylate + succinate + A + 2 CO2 + H2O. It functions in the pathway secondary metabolite biosynthesis; terpenoid biosynthesis. Functionally, bifunctional enzyme; part of the gene cluster that mediates the biosynthesis of flavunoidine, an alkaloidal terpenoid with a tetracyclic cage-like core connected to dimethylcadaverine via a C-N bond and acylated with 5,5-dimethyl-L-pipecolate. The tetracyclic core is synthesized by the terpene cyclase flvE and the cytochrome P450 monooxygenase flvD. The terpene cyclase flvE catalyzes the cyclization of farnesyl pyrophosphate (FPP) to form (1R,4R,5S)-(+)-acoradiene and the cytochrome P450 monooxygenase flvD is then responsible for oxidative conversion of (1R,4R,5S)-(+)-acoradiene into the tetracyclic cage present in the final product flavunoidine. In parallel, the N-methyltransferase flvH dimethylates L-lysine to give N,N-dimethyl-L-Lysin which is decarboxylated by flvG to afford dimethylcadaverine. The terpene cyclase-like protein flvF is the enzyme that attaches the dimethylcadaverine precusor at the C-7 of the tetracyclic cage to yield pre-flavunoidine. The cytochrome monooxygenase flvC hydroxylates the C-10 position of pre-flavunoidine whereas the NRPS flvI acylates the terpenoid core at the hydroxylated C-10 with dimethylpipecolate to yield final flavunoidine. The bifunctional enzyme flvA and the dehydrogenase flvB are responsible for the synthesis of the dimethylpipecolate precursor. The PLP-dependent lyase domain of flvA might use L-O-acetyl-homoserine and alpha-keto-isovalerate to form an intermediary ketone that can cyclize intramolecularly to yield an imine. The imine can be reduced by flvB to yield the 6-carboxylated pipecolate. The C-terminal alpha-KG-dependent oxygenase domain of flvA is then proposed to catalyze the decarboxylation to yield dimethylpipecolate. In Aspergillus flavus (strain ATCC 200026 / FGSC A1120 / IAM 13836 / NRRL 3357 / JCM 12722 / SRRC 167), this protein is Bifunctional enzyme flvA.